The sequence spans 234 residues: Myelin protein zero-like protein 3 (234 aa).

An N-terminal signal peptide occupies residues 1 to 31; sequence MQQSGVPGSRGCALCPLLGVLFFQGVYVIFS. In terms of domain architecture, Ig-like V-type spans 32–148; that stretch reads LEIKADAHVR…NIPATELTVT (117 aa). The Extracellular portion of the chain corresponds to 32 to 158; sequence LEIKADAHVR…ERGFGTMLSS (127 aa). Cysteine 52 and cysteine 128 are disulfide-bonded. Residue asparagine 123 is glycosylated (N-linked (GlcNAc...) asparagine). Residues 159 to 179 form a helical membrane-spanning segment; that stretch reads VALLSILVFIPSTVVVILLLV. The Cytoplasmic segment spans residues 180-234; that stretch reads RMGRKSAGLKKRSKSGYKKSSIEVSDDTDQEGDDCMAKLCVRCAECVDSDYEETY.

Belongs to the myelin P0 protein family.

It localises to the membrane. Its function is as follows. Mediates homophilic cell-cell adhesion. The chain is Myelin protein zero-like protein 3 (MPZL3) from Bos taurus (Bovine).